The sequence spans 274 residues: NAD-dependent protein deacylase (274 aa).

A Deacetylase sirtuin-type domain is found at 4-274 (CLLPSSDMDA…GELLPKALAP (271 aa)). 29-48 (GAGVSAESGVPTFRGAGGLW) provides a ligand contact to NAD(+). 2 residues coordinate substrate: Y73 and R76. Position 111–114 (111–114 (QNID)) interacts with NAD(+). Catalysis depends on H129, which acts as the Proton acceptor. The Zn(2+) site is built by C137, C140, C178, and C183. Residues 220 to 222 (GTS), 246 to 248 (NME), and C264 each bind NAD(+).

Belongs to the sirtuin family. Class III subfamily. Zn(2+) serves as cofactor.

The protein localises to the mitochondrion. The catalysed reaction is N(6)-malonyl-L-lysyl-[protein] + NAD(+) + H2O = 2''-O-malonyl-ADP-D-ribose + nicotinamide + L-lysyl-[protein]. The enzyme catalyses N(6)-succinyl-L-lysyl-[protein] + NAD(+) + H2O = 2''-O-succinyl-ADP-D-ribose + nicotinamide + L-lysyl-[protein]. It carries out the reaction N(6)-glutaryl-L-lysyl-[protein] + NAD(+) + H2O = 2''-O-glutaryl-ADP-D-ribose + nicotinamide + L-lysyl-[protein]. Its function is as follows. NAD-dependent lysine demalonylase, desuccinylase and deglutarylase that specifically removes malonyl, succinyl and glutaryl groups on target proteins. Has weak NAD-dependent protein deacetylase activity; however this activity may not be physiologically relevant in vivo. This is NAD-dependent protein deacylase from Daphnia pulex (Water flea).